A 526-amino-acid polypeptide reads, in one-letter code: Reticulocyte-binding protein homolog 5 (526 aa).

An N-terminal signal peptide occupies residues 1 to 24 (MIRIKKKLILTIIYIHLFILNRLS). Residues 33 to 51 (KNQENNLTLLPIKSTEEEK) are mediates interaction with human BSG. Residues Asn38 and Asn214 are each glycosylated (N-linked (GlcNAc...) asparagine). Intrachain disulfides connect Cys224-Cys317 and Cys345-Cys351. Acidic residues predominate over residues 259 to 279 (EIDDKSEETDDETEEVEDSIQ). The interval 259–294 (EIDDKSEETDDETEEVEDSIQDTDSNHTPSNKKKND) is disordered. N-linked (GlcNAc...) asparagine glycosylation is present at Asn297.

As to quaternary structure, forms a complex composed of RH5, P113 and human BSG/basigin; the complex bridges the merozoite and host erythrocyte membranes. Within the complex, interacts (via C-terminus) with human BSG/basigin isoform 2 (via the extracellular domain); the interaction is independent of BSG glycosylation status. Weakly interacts with P.troglodytes BSG but not with G.gorilla BSG. Also, interacts (via N-terminus) with P113; the interaction tethers RH5 to the merozoite membrane. Component of the PfRH5 adhesion complex composed of 1 copy of CyRPA, RH5 and RIPR; the complex is formed during merozoite invasion of host erythrocytes specifically at the interface between the parasite and host membranes. Within the complex, interacts with CyRPA. CyRPA recruits RIPR to the RH5-P113-BSG complex; the formation of the PfRH5 adhesion complex increases the affinity of RH5 for BSG and probably leads to the release of RH5 from P113 while maintaining the interaction of the PfRH5 adhesion complex with BSG. In terms of processing, cleaved into a 45kDa form during merozoite invasion of host erythrocyte.

The protein localises to the secreted. It localises to the cytoplasmic vesicle. It is found in the secretory vesicle. Its subcellular location is the rhoptry lumen. The protein resides in the host cell membrane. In terms of biological role, essential for the invasion of host erythrocytes by blood stage merozoites. By binding P113 at the surface of the merozoite and human BSG/basigin on the erythrocyte membrane, leads to the establishment of a tight junction between the merozoite and host erythrocyte membranes. In addition, the interaction with BSG results in BSG dimerization which triggers an increase in intracellular Ca(2+) in the erythrocyte. This essential step leads to a rearrangement of the erythrocyte cytoskeleton required for the merozoite invasion. This is Reticulocyte-binding protein homolog 5 from Plasmodium falciparum (isolate 3D7).